The primary structure comprises 335 residues: Phosphate acyltransferase (335 aa).

Belongs to the PlsX family. In terms of assembly, homodimer. Probably interacts with PlsY.

Its subcellular location is the cytoplasm. It carries out the reaction a fatty acyl-[ACP] + phosphate = an acyl phosphate + holo-[ACP]. Its pathway is lipid metabolism; phospholipid metabolism. Its function is as follows. Catalyzes the reversible formation of acyl-phosphate (acyl-PO(4)) from acyl-[acyl-carrier-protein] (acyl-ACP). This enzyme utilizes acyl-ACP as fatty acyl donor, but not acyl-CoA. This is Phosphate acyltransferase from Streptococcus suis (strain 98HAH33).